The following is a 2431-amino-acid chain: Nucleoprotein TPR (2431 aa).

A disordered region spans residues 1 to 48; it reads MTSGGSASRSGHRGVPMTSRGFDGSRRGSLRRAGARETASEAADGAAP. The tract at residues 77-87 is sufficient for interaction with TPR; that stretch reads AVLQQVLERPE. The segment at 88 to 191 is necessary for interaction with HSF1; the sequence is LNKLPKSTQN…GIQSQFTRAK (104 aa). The stretch at 98-444 forms a coiled coil; that stretch reads KLEKFLAEQQ…SATKRKGAIL (347 aa). Lysine 326, lysine 386, and lysine 419 each carry N6-acetyllysine. Residue serine 453 is modified to Phosphoserine. The stretch at 486–678 forms a coiled coil; sequence EKQENKRINK…ESRQHQMQLV (193 aa). 3 positions are modified to N6-acetyllysine: lysine 502, lysine 531, and lysine 551. Positions 511–587 are necessary for association to the NPC; that stretch reads LKRQREEYER…LMELEEARGN (77 aa). 3 positions are modified to phosphoserine: serine 596, serine 597, and serine 706. Residues 736–1246 are a coiled coil; sequence STEAIEAKAA…IEKLSDKVVT (511 aa). Lysine 787, lysine 797, lysine 822, and lysine 829 each carry N6-acetyllysine. Residues 989–998 show a composition bias toward polar residues; sequence LASQSTQRTG. The segment at 989 to 1011 is disordered; sequence LASQSTQRTGKGQPGDRDDVDDL. Residues 1002-1011 show a composition bias toward basic and acidic residues; the sequence is PGDRDDVDDL. Serine 1259 carries the phosphoserine modification. 2 coiled-coil regions span residues 1289–1494 and 1547–1700; these read EVAQ…LDAK and VQEM…QRDE. The tract at residues 1292–1394 is necessary for interaction with HSF1; sequence QVESLRYRQR…NAELSEKSGM (103 aa). Residues 1689–1701 show a composition bias toward basic and acidic residues; the sequence is EHQERHLEQRDEP. The disordered stretch occupies residues 1689 to 1744; sequence EHQERHLEQRDEPQEPTNKAPEQQRQITLKTTPASGERGIASTSDPPTANIKPTPV. Over residues 1703 to 1722 the composition is skewed to polar residues; it reads EPTNKAPEQQRQITLKTTPA. Lysine 1760 carries the post-translational modification N6-acetyllysine. Threonine 1762 carries the phosphothreonine modification. A compositionally biased stretch (polar residues) spans 1873–1898; it reads SSPVERPSTSTAVFGTVSATPSSSLP. The disordered stretch occupies residues 1873 to 2193; the sequence is SSPVERPSTS…TPGIGGMQQH (321 aa). The interval 1882–1937 is sufficient and essential for mediating its nuclear import; it reads STAVFGTVSATPSSSLPKRTREEEEDSTMEAGDQVSEDTVEMPLPKKLKMVTPVGT. Acidic residues predominate over residues 1937–1951; sequence TEEEVMAEESTDGEA. A compositionally biased stretch (polar residues) spans 1954–1963; it reads QAYNQDSQDS. The residue at position 1963 (serine 1963) is a Phosphoserine. Low complexity predominate over residues 1994–2005; sequence QSDQQTTSSQDG. 2 stretches are compositionally biased toward acidic residues: residues 2016-2057 and 2067-2088; these read DSDD…EDSN and DGYE…ETEE. The span at 2100 to 2132 shows a compositional bias: polar residues; the sequence is ADSQNSGEGNTSAAESSFSQEVAREQQPTSASE. Residues serine 2102, serine 2105, serine 2116, serine 2118, and serine 2141 each carry the phosphoserine modification. Omega-N-methylarginine occurs at positions 2174 and 2179. 2 positions are modified to phosphothreonine: threonine 2184 and threonine 2205. Serine 2223 bears the Phosphoserine mark. Omega-N-methylarginine is present on arginine 2231. Residues 2295 to 2312 show a composition bias toward polar residues; that stretch reads ESTTSDASEHASQSVPMV. The interval 2295–2431 is disordered; the sequence is ESTTSDASEH…RGGINRGNIN (137 aa). The segment covering 2313–2325 has biased composition (low complexity); that stretch reads TTSTGTLSTTNET. Residues 2327 to 2340 are compositionally biased toward acidic residues; the sequence is AGDDGDEVFVEAES. Low complexity predominate over residues 2341-2351; it reads EGISSEAGLEI. Positions 2353-2367 are enriched in acidic residues; sequence SQQEEEPVQASDESD. Residues 2368–2388 are compositionally biased toward low complexity; sequence LPSTSQDPPSSSSVDTSSSQP. Arginine 2411, arginine 2413, and arginine 2422 each carry asymmetric dimethylarginine. Over residues 2420 to 2431 the composition is skewed to gly residues; that stretch reads GGRGGINRGNIN.

Belongs to the TPR family. Homodimer. Part of the nuclear pore complex (NPC). Associates with the XPO1/CRM1-mediated nuclear export complex, the Importin alpha/Importin beta receptor and the dynein 1 complex. Interacts (via C-terminal domain) with the KPNB1; the interaction occurs in a RanGTP-dependent manner. Interacts (via C-terminal region and phosphorylated form) with MAPK1/ERK2 (via phosphorylated form); the interaction requires dimerization of MAPK1/ERK2 and increases following EGF stimulation. Interacts with MAPK3/ERK1; the interaction increases following EGF stimulation. Interacts (via coiled coil region) with NUP153; the interaction is direct. Interacts with HSF1; the interaction increases in a stress-responsive manner and stimulates export of stress-induced HSP70 mRNA. Interacts with huntingtin/HTT; the interaction is inhibited by aggregated huntingtin/HTT forms with expanded polyglutamine stretch. Interacts with MAD1L1 (via N-terminal region), MAD2L1, and TTK; the interactions occurs in a microtubule-independent manner. Interacts (via middle region) with DYNLL1. Interacts with DCTN1, dynein, NUP153 and tubulin. Interacts with MTA1. Interacts with IFI204 (via C-terminal region). Interacts with IFI203. Interacts with ZC3HC1; this interaction mediates ZC3HC1 nuclear envelopes (NE)-association but also required for proper positioning of a substantial amount of TPR at the nuclear basket (NB). Post-translationally, phosphorylated. Phosphorylation occurs on serine and threonine residues (comprised in the C-terminal region) by MAPK1/ERK2 and stabilizes the interaction between these two proteins. Expressed in the heart, liver, kidney, spleen, lung and skeletal muscles.

The protein localises to the nucleus. The protein resides in the nucleus membrane. Its subcellular location is the nucleus envelope. It is found in the nuclear pore complex. It localises to the cytoplasm. The protein localises to the cytoskeleton. The protein resides in the spindle. Its subcellular location is the chromosome. It is found in the centromere. It localises to the kinetochore. Component of the nuclear pore complex (NPC), a complex required for the trafficking across the nuclear envelope. Functions as a scaffolding element in the nuclear phase of the NPC essential for normal nucleocytoplasmic transport of proteins and mRNAs, plays a role in the establishment of nuclear-peripheral chromatin compartmentalization in interphase, and in the mitotic spindle checkpoint signaling during mitosis. Involved in the quality control and retention of unspliced mRNAs in the nucleus; in association with NUP153, regulates the nuclear export of unspliced mRNA species bearing constitutive transport element (CTE) in a NXF1- and KHDRBS1-independent manner. Negatively regulates both the association of CTE-containing mRNA with large polyribosomes and translation initiation. Does not play any role in Rev response element (RRE)-mediated export of unspliced mRNAs. Implicated in nuclear export of mRNAs transcribed from heat shock gene promoters; associates both with chromatin in the HSP70 promoter and with mRNAs transcribed from this promoter under stress-induced conditions. Plays a limited role in the regulation of nuclear protein export. Modulates the nucleocytoplasmic transport of activated MAPK1/ERK2 and huntingtin/HTT and may serve as a docking site for the XPO1/CRM1-mediated nuclear export complex. Also plays a role as a structural and functional element of the perinuclear chromatin distribution; involved in the formation and/or maintenance of NPC-associated perinuclear heterochromatin exclusion zones (HEZs). Finally, acts as a spatial regulator of the spindle-assembly checkpoint (SAC) response ensuring a timely and effective recruitment of spindle checkpoint proteins like MAD1L1 and MAD2L1 to unattached kinetochore during the metaphase-anaphase transition before chromosome congression. Its N-terminus is involved in activation of oncogenic kinases. The chain is Nucleoprotein TPR from Mus musculus (Mouse).